Reading from the N-terminus, the 174-residue chain is MCEDKKTDSRSQQECQKELEELRERLKDLENEIKKKEEEVREYTSHLQRLQADFDNYKKQMEKQELEIIKNANERLILKLLDVYEDLERAIENQDSSMDGLEVIYRKFRDTLTKEGLSEIPAEGEKFDPFLHEAVMVEDHDGYEDGIIIEELSRGYRLNDRIIKHSIVKVCKKS.

It belongs to the GrpE family. As to quaternary structure, homodimer.

It localises to the cytoplasm. In terms of biological role, participates actively in the response to hyperosmotic and heat shock by preventing the aggregation of stress-denatured proteins, in association with DnaK and GrpE. It is the nucleotide exchange factor for DnaK and may function as a thermosensor. Unfolded proteins bind initially to DnaJ; upon interaction with the DnaJ-bound protein, DnaK hydrolyzes its bound ATP, resulting in the formation of a stable complex. GrpE releases ADP from DnaK; ATP binding to DnaK triggers the release of the substrate protein, thus completing the reaction cycle. Several rounds of ATP-dependent interactions between DnaJ, DnaK and GrpE are required for fully efficient folding. The protein is Protein GrpE of Methanothermobacter thermautotrophicus (strain ATCC 29096 / DSM 1053 / JCM 10044 / NBRC 100330 / Delta H) (Methanobacterium thermoautotrophicum).